The chain runs to 343 residues: ABC transporter riboflavin-binding protein RfuA (343 aa).

The N-terminal stretch at M1–S19 is a signal peptide. A lipid anchor (N-palmitoyl cysteine) is attached at C20. A lipid anchor (S-diacylglycerol cysteine) is attached at C20. Residues S43–Y46, D124, Q140, Y176, W208, and D255 each bind riboflavin.

It belongs to the BMP lipoprotein family. Monomer in solution. The complex is probably composed of two ATP-binding proteins (RfuB), two transmembrane proteins (RfuC and RfuD) and a solute-binding protein (RfuA).

The protein localises to the cell inner membrane. Its function is as follows. Probably part of the ABC transporter complex RfuABCD involved in riboflavin import. Binds riboflavin. The polypeptide is ABC transporter riboflavin-binding protein RfuA (Treponema pallidum (strain Nichols)).